Here is a 320-residue protein sequence, read N- to C-terminus: D-alanine--D-alanine ligase (320 aa).

The region spanning 120 to 314 (SSWFFANSIN…FTNLIAEIIK (195 aa)) is the ATP-grasp domain. 147–198 (MKRPYVIKPLTQGSSIGVEVIFEEDDFNFADYDFPYGDQVVIERYIKGREFQ) contributes to the ATP binding site. E267, E281, and N283 together coordinate Mg(2+).

Belongs to the D-alanine--D-alanine ligase family. Mg(2+) serves as cofactor. It depends on Mn(2+) as a cofactor.

It is found in the cytoplasm. The catalysed reaction is 2 D-alanine + ATP = D-alanyl-D-alanine + ADP + phosphate + H(+). Its pathway is cell wall biogenesis; peptidoglycan biosynthesis. Its function is as follows. Cell wall formation. This chain is D-alanine--D-alanine ligase, found in Rickettsia akari (strain Hartford).